The following is a 329-amino-acid chain: Beta-tectorin (329 aa).

A signal peptide spans 1 to 17 (MVTKAFVLLAIFAEASA). The ZP domain maps to 19 to 283 (SCAPNKADVI…LSCPVTCDKR (265 aa)). Residues Asn80, Asn104, Asn116, and Asn145 are each glycosylated (N-linked (GlcNAc...) asparagine). A disulfide bridge links Cys204 with Cys264. Residue Gly305 is the site of GPI-anchor amidated glycine attachment. A propeptide spans 306-329 (FSSLYSFSDVLHHLIMMLGICAVL) (removed in mature form).

In terms of assembly, may form homomeric filament after self-association or heteromeric filament after association with alpha-tectorin. Interacts with CEACAM16. In terms of processing, the presence of a hydrophobic C-terminus preceded by a potential cleavage site strongly suggests that tectorins are synthesized as glycosylphosphatidylinositol-linked, membrane-bound precursors. Tectorins are targeted to the apical surface of the inner ear epithelia by the lipid and proteolytically released into the extracellular compartment.

It is found in the cell membrane. The protein localises to the secreted. Its subcellular location is the extracellular space. It localises to the extracellular matrix. Its function is as follows. One of the major non-collagenous components of the tectorial membrane. The tectorial membrane is an extracellular matrix of the inner ear that covers the neuroepithelium of the cochlea and contacts the stereocilia bundles of specialized sensory hair cells. Sound induces movement of these hair cells relative to the tectorial membrane, deflects the stereocilia and leads to fluctuations in hair-cell membrane potential, transducing sound into electrical signals. In Homo sapiens (Human), this protein is Beta-tectorin (TECTB).